Reading from the N-terminus, the 624-residue chain is Chaperone protein HtpG (624 aa).

Residues 1–336 (MKGQETRGFQ…SNDLPLNVSR (336 aa)) are a; substrate-binding. The tract at residues 337–552 (EILQDSTVTR…ADEMGTQMAK (216 aa)) is b. Positions 553 to 624 (LFAAAGQAMP…IKRVNALLLG (72 aa)) are c.

The protein belongs to the heat shock protein 90 family. Homodimer.

The protein localises to the cytoplasm. In terms of biological role, molecular chaperone. Has ATPase activity. In Enterobacter sp. (strain 638), this protein is Chaperone protein HtpG.